The sequence spans 1938 residues: Myosin-1 (1938 aa).

Residues Asp-33–Pro-82 enclose the Myosin N-terminal SH3-like domain. Thr-64 and Thr-69 each carry phosphothreonine. The Myosin motor domain maps to Asp-86–Asp-781. Lys-130 is subject to N6,N6,N6-trimethyllysine. Position 179–186 (Gly-179–Thr-186) interacts with ATP. The residue at position 389 (Tyr-389) is a Phosphotyrosine. Residue Thr-419 is modified to Phosphothreonine. Tyr-424 is modified (phosphotyrosine). At Ser-625 the chain carries Phosphoserine. The segment at Leu-658 to Glu-680 is actin-binding. His-756 is modified (pros-methylhistidine). The interval Lys-760–Gly-774 is actin-binding. The region spanning Leu-784–Ser-813 is the IQ domain. Residues Leu-842–Glu-1938 are a coiled coil. Residues Ser-1091 and Ser-1095 each carry the phosphoserine modification. Disordered stretches follow at residues Glu-1124–Leu-1146 and Arg-1152–Glu-1171. Residues Ala-1127–Leu-1146 show a composition bias toward basic and acidic residues. Phosphoserine is present on residues Ser-1161 and Ser-1236. Thr-1240 carries the phosphothreonine modification. 2 positions are modified to phosphoserine: Ser-1242 and Ser-1260. 2 positions are modified to phosphothreonine: Thr-1264 and Thr-1285. Residues Ser-1287, Ser-1291, Ser-1302, and Ser-1305 each carry the phosphoserine modification. At Tyr-1463 the chain carries Phosphotyrosine. Thr-1466 carries the post-translational modification Phosphothreonine. Residue Ser-1473 is modified to Phosphoserine. Position 1491 is a phosphotyrosine (Tyr-1491). A Phosphoserine modification is found at Ser-1494. Thr-1500 is modified (phosphothreonine). Phosphoserine is present on Ser-1513. Thr-1516 is subject to Phosphothreonine. A phosphoserine mark is found at Ser-1541, Ser-1553, Ser-1573, Ser-1599, Ser-1602, Ser-1713, and Ser-1725. 2 positions are modified to phosphothreonine: Thr-1729 and Thr-1735.

It belongs to the TRAFAC class myosin-kinesin ATPase superfamily. Myosin family. Muscle myosin is a hexameric protein that consists of 2 heavy chain subunits (MHC), 2 alkali light chain subunits (MLC) and 2 regulatory light chain subunits (MLC-2). Interacts with SLC26A5.

The protein resides in the cytoplasm. It is found in the myofibril. Required for normal hearing. It plays a role in cochlear amplification of auditory stimuli, likely through the positive regulation of prestin (SLC26A5) activity and outer hair cell (OHC) electromotility. This chain is Myosin-1 (MYH1), found in Bos taurus (Bovine).